The primary structure comprises 182 residues: Large ribosomal subunit protein uL16 (182 aa).

This sequence belongs to the universal ribosomal protein uL16 family.

This Thermococcus onnurineus (strain NA1) protein is Large ribosomal subunit protein uL16.